A 276-amino-acid polypeptide reads, in one-letter code: Rhomboid protease GlpG (276 aa).

6 helical membrane passes run 94–114 (GPVT…MQIL), 142–162 (ALMH…WYLG), 169–189 (LGSG…GYVQ), 192–212 (FSGP…GYVW), 229–249 (LIIF…GMSM), and 250–270 (ANGA…VDSL). Residue serine 201 is the Nucleophile of the active site. Histidine 254 is an active-site residue.

This sequence belongs to the peptidase S54 family.

It localises to the cell inner membrane. It catalyses the reaction Cleaves type-1 transmembrane domains using a catalytic dyad composed of serine and histidine that are contributed by different transmembrane domains.. Functionally, rhomboid-type serine protease that catalyzes intramembrane proteolysis. This Escherichia coli (strain 55989 / EAEC) protein is Rhomboid protease GlpG.